Reading from the N-terminus, the 152-residue chain is Small ribosomal subunit protein uS19 (152 aa).

It belongs to the universal ribosomal protein uS19 family.

The sequence is that of Small ribosomal subunit protein uS19 (RPS15) from Podospora anserina (Pleurage anserina).